The chain runs to 182 residues: ADP-ribosylation factor 1 (182 aa).

The N-myristoyl glycine moiety is linked to residue Gly-2. GTP is bound by residues 24–31 (GLDNAGKT), 67–71 (DLGGQ), and 126–129 (NKQD).

Belongs to the small GTPase superfamily. Arf family.

Its subcellular location is the golgi apparatus. It carries out the reaction GTP + H2O = GDP + phosphate + H(+). Functionally, GTP-binding protein involved in protein trafficking; may modulate vesicle budding and uncoating within the Golgi apparatus. In Brassica rapa subsp. pekinensis (Chinese cabbage), this protein is ADP-ribosylation factor 1 (ARF1).